The primary structure comprises 582 residues: ATP-dependent lipid A-core flippase (582 aa).

6 helical membrane-spanning segments follow: residues 23 to 43 (AAFI…TLFL), 61 to 81 (ILLY…SLNV), 140 to 160 (AVLV…LMFY), 163 to 183 (WQLS…VGVV), 247 to 267 (AIST…VLVI), and 273 to 293 (MLGE…IMLL). An ABC transmembrane type-1 domain is found at 26–308 (IAAILCMIGY…LTNVNSDFQR (283 aa)). The ABC transporter domain occupies 340–576 (IVFDDVTFSY…EGAYFQLHNL (237 aa)). 374 to 381 (GRSGSGKS) provides a ligand contact to ATP.

The protein belongs to the ABC transporter superfamily. Lipid exporter (TC 3.A.1.106) family. Homodimer.

The protein localises to the cell inner membrane. It catalyses the reaction ATP + H2O + lipid A-core oligosaccharideSide 1 = ADP + phosphate + lipid A-core oligosaccharideSide 2.. Functionally, involved in lipopolysaccharide (LPS) biosynthesis. Translocates lipid A-core from the inner to the outer leaflet of the inner membrane. Transmembrane domains (TMD) form a pore in the inner membrane and the ATP-binding domain (NBD) is responsible for energy generation. This chain is ATP-dependent lipid A-core flippase, found in Idiomarina loihiensis (strain ATCC BAA-735 / DSM 15497 / L2-TR).